The chain runs to 224 residues: Probable septum site-determining protein MinC (224 aa).

Belongs to the MinC family. In terms of assembly, interacts with MinD and FtsZ.

Cell division inhibitor that blocks the formation of polar Z ring septums. Rapidly oscillates between the poles of the cell to destabilize FtsZ filaments that have formed before they mature into polar Z rings. Prevents FtsZ polymerization. The polypeptide is Probable septum site-determining protein MinC (Shewanella amazonensis (strain ATCC BAA-1098 / SB2B)).